The chain runs to 702 residues: Ribosomal RNA large subunit methyltransferase K/L (702 aa).

The THUMP domain occupies 43-154; it reads LVYQSLMWSR…KETASIALDL (112 aa).

It belongs to the methyltransferase superfamily. RlmKL family.

The protein resides in the cytoplasm. It catalyses the reaction guanosine(2445) in 23S rRNA + S-adenosyl-L-methionine = N(2)-methylguanosine(2445) in 23S rRNA + S-adenosyl-L-homocysteine + H(+). The catalysed reaction is guanosine(2069) in 23S rRNA + S-adenosyl-L-methionine = N(2)-methylguanosine(2069) in 23S rRNA + S-adenosyl-L-homocysteine + H(+). Its function is as follows. Specifically methylates the guanine in position 2445 (m2G2445) and the guanine in position 2069 (m7G2069) of 23S rRNA. This Escherichia coli (strain K12 / DH10B) protein is Ribosomal RNA large subunit methyltransferase K/L.